The following is a 264-amino-acid chain: RNA-binding protein pos-1 (264 aa).

Residues Q56–P82 form a disordered region. Polar residues predominate over residues Q61–A74. C3H1-type zinc fingers lie at residues A98–H126 and K141–V169. Residues C104, C113, C119, H123, C147, C156, C162, and H166 each coordinate Zn(2+).

In terms of assembly, monomer.

The protein resides in the cytoplasm. Its function is as follows. RNA-binding protein that coordinates cell fate specification and differentiation during early embryogenesis. Binds to a consensus pos-1 recognition element (PRE) consisting of the sequence 5'-UA(U 2-3)RGD(N 1-3)G-3', where R is any purine, D is A, G, or U, and N is any base. The PRE motif is found within the 3' untranslated region of many maternal transcripts required for early development. Binds to the 3' untranslated region (UTR) of Notch receptor homolog glp-1, thereby repressing glp-1 translation in the posterior blastomeres in the embryo. Binding to glp-1 3' UTR excludes cell fate regulator gld-1 binding to an overlapping binding site in the glp-1 3' UTR. Binds to the neg-1 3'UTR thereby opposing neg-1 expression and cytoplasmic polyadenylation of the neg-1 mRNA poly(A) tail promoted by gld-2 and gld-3. By inhibiting the cytoplasmic lengthening of neg-1 mRNA, restricts the accumulation of neg-1 protein and promotes endo-mesoderm development in anterior blastomeres. Essential for germline specification. The protein is RNA-binding protein pos-1 of Caenorhabditis elegans.